A 270-amino-acid polypeptide reads, in one-letter code: Putative phosphoenolpyruvate synthase regulatory protein (270 aa).

An ADP-binding site is contributed by 150–157 (GVSRCGKT).

It belongs to the pyruvate, phosphate/water dikinase regulatory protein family. PSRP subfamily.

The catalysed reaction is [pyruvate, water dikinase] + ADP = [pyruvate, water dikinase]-phosphate + AMP + H(+). The enzyme catalyses [pyruvate, water dikinase]-phosphate + phosphate + H(+) = [pyruvate, water dikinase] + diphosphate. In terms of biological role, bifunctional serine/threonine kinase and phosphorylase involved in the regulation of the phosphoenolpyruvate synthase (PEPS) by catalyzing its phosphorylation/dephosphorylation. The polypeptide is Putative phosphoenolpyruvate synthase regulatory protein (Shewanella frigidimarina (strain NCIMB 400)).